The following is a 268-amino-acid chain: Early nodulin-20 (268 aa).

The N-terminal stretch at 1 to 24 (MSSSSPILLMFIFSIWMLISYSES) is a signal peptide. Residues 25–129 (TDYLVGDSEN…GLKLAVVVMV (105 aa)) enclose the Phytocyanin domain. Residue asparagine 67 is glycosylated (N-linked (GlcNAc...) asparagine). A disulfide bridge links cysteine 83 with cysteine 117. 2 stretches are compositionally biased toward pro residues: residues 134–145 (SSPPPPPSPPTP) and 160–185 (PSPPSPSPSPSPSPSPSPSPRSTPIP). Positions 134–253 (SSPPPPPSPP…SGSKGGGAGH (120 aa)) are disordered. The segment covering 199 to 235 (PSLSKSPSPSESPSLAPSPSDSVASLAPSSSPSDESP) has biased composition (low complexity). A lipid anchor (GPI-anchor amidated serine) is attached at serine 243. Positions 244–268 (SGSKGGGAGHGFLEVSIAMMMFLIF) are cleaved as a propeptide — removed in mature form.

This sequence belongs to the early nodulin-like (ENODL) family.

Its subcellular location is the cell membrane. May act as a carbohydrate transporter. This Medicago truncatula (Barrel medic) protein is Early nodulin-20.